The following is a 143-amino-acid chain: Large ribosomal subunit protein uL11 (143 aa).

It belongs to the universal ribosomal protein uL11 family. In terms of assembly, part of the ribosomal stalk of the 50S ribosomal subunit. Interacts with L10 and the large rRNA to form the base of the stalk. L10 forms an elongated spine to which L12 dimers bind in a sequential fashion forming a multimeric L10(L12)X complex. One or more lysine residues are methylated.

In terms of biological role, forms part of the ribosomal stalk which helps the ribosome interact with GTP-bound translation factors. This chain is Large ribosomal subunit protein uL11, found in Sphingopyxis alaskensis (strain DSM 13593 / LMG 18877 / RB2256) (Sphingomonas alaskensis).